The primary structure comprises 323 residues: Breast cancer metastasis-suppressor 1-like protein (323 aa).

The segment covering 1–17 (MPVHSRGDKKETNHHDE) has biased composition (basic and acidic residues). Residues 1–56 (MPVHSRGDKKETNHHDEMEVDYAENEGSSSEDEDTESSSVSEDGDSSEMDDEDCER) are disordered. The span at 18 to 53 (MEVDYAENEGSSSEDEDTESSSVSEDGDSSEMDDED) shows a compositional bias: acidic residues. Coiled-coil stretches lie at residues 52–84 (EDCERRRMECLDEMSNLEKQFTDLKDQLYKERL) and 149–180 (EKLLLYDTVQSELEEKIRRLEEDRHSIDITSE). The residue at position 197 (Ser-197) is a Phosphoserine. Glycyl lysine isopeptide (Lys-Gly) (interchain with G-Cter in SUMO2) cross-links involve residues Lys-240 and Lys-246.

This sequence belongs to the BRMS1 family. As to quaternary structure, component of the Sin3/HDAC1 corepressor complex at least composed of BRMS1, BRMS1L and ING2/ING1L. Interacts with HDAC and SIN3A.

Its subcellular location is the nucleus. In terms of biological role, involved in the histone deacetylase (HDAC1)-dependent transcriptional repression activity. When overexpressed in lung cancer cell line that lacks p53/TP53 expression, inhibits cell growth. This is Breast cancer metastasis-suppressor 1-like protein (BRMS1L) from Bos taurus (Bovine).